The primary structure comprises 372 residues: tRNA-specific 2-thiouridylase MnmA (372 aa).

ATP-binding positions include 11–18 (GMSGGVDS) and methionine 37. The segment at 97 to 99 (NPD) is interaction with target base in tRNA. The active-site Nucleophile is cysteine 102. A disulfide bridge connects residues cysteine 102 and cysteine 199. Glycine 126 contacts ATP. Residues 149–151 (KDQ) form an interaction with tRNA region. Cysteine 199 serves as the catalytic Cysteine persulfide intermediate. Residues 309–310 (RY) form an interaction with tRNA region.

Belongs to the MnmA/TRMU family.

It is found in the cytoplasm. It carries out the reaction S-sulfanyl-L-cysteinyl-[protein] + uridine(34) in tRNA + AH2 + ATP = 2-thiouridine(34) in tRNA + L-cysteinyl-[protein] + A + AMP + diphosphate + H(+). Functionally, catalyzes the 2-thiolation of uridine at the wobble position (U34) of tRNA, leading to the formation of s(2)U34. The protein is tRNA-specific 2-thiouridylase MnmA of Staphylococcus epidermidis (strain ATCC 35984 / DSM 28319 / BCRC 17069 / CCUG 31568 / BM 3577 / RP62A).